Reading from the N-terminus, the 147-residue chain is Transthyretin (147 aa).

Positions 1–20 (MASLRLFLLCLAGLIFASEA) are cleaved as a signal peptide. Position 30 is a sulfocysteine (Cys30). Residue Lys35 participates in L-thyroxine binding. The residue at position 62 (Glu62) is a 4-carboxyglutamate. At Ser72 the chain carries Phosphoserine. Glu74 provides a ligand contact to L-thyroxine. Asn118 carries an N-linked (GlcNAc...) asparagine glycan. Ser137 is an L-thyroxine binding site.

The protein belongs to the transthyretin family. As to quaternary structure, homotetramer. Dimer of dimers. In the homotetramer, subunits assemble around a central channel that can accommodate two ligand molecules. Interacts with RBP4. Post-translationally, sulfonation of the reactive cysteine Cys-30 enhances the stability of the native conformation of TTR, avoiding misassembly of the protein leading to amyloid formation. In terms of tissue distribution, detected in serum and cerebrospinal fluid (at protein level). Highly expressed in the choroid plexus. Detected at lower levels in the liver.

It is found in the secreted. Thyroid hormone-binding protein. Probably transports thyroxine from the bloodstream to the brain. The protein is Transthyretin (Ttr) of Rattus norvegicus (Rat).